The following is a 243-amino-acid chain: uncharacterized protein (243 aa).

The segment at 71-120 (KRTNVSQRNRKKGIKNNRPHKDINSSPDWGNAHRGTDWQSEKANGMNRAK) is disordered. Over residues 78-88 (RNRKKGIKNNR) the composition is skewed to basic residues. Serine 96 is subject to Phosphoserine.

This is an uncharacterized protein from Saccharomyces cerevisiae (strain ATCC 204508 / S288c) (Baker's yeast).